A 142-amino-acid chain; its full sequence is Small ribosomal subunit protein uS9c (142 aa).

Belongs to the universal ribosomal protein uS9 family.

Its subcellular location is the plastid. It is found in the chloroplast. The chain is Small ribosomal subunit protein uS9c (rps9) from Stigeoclonium helveticum (Green alga).